Here is a 204-residue protein sequence, read N- to C-terminus: MMRTLITTHPLLLLLLLQQLLQPVQFQEVDTDFDSPDDDMEEFEEYLEEFHRTGPTRPPTKEKVERRVLIEPGMPLYDRNYCNEEIMRKNVYHKQRCVTEHYFLLMQYDELQKICYNRFVPCKNGVRKCNRSKGLVEGVYCNLTEAFEIPWCKYESFYRRGYVLITCTWQNEIQKLIPHTINDLVEPPEHRSFLNEDGVFVIPP.

Residues 1 to 26 (MMRTLITTHPLLLLLLLQQLLQPVQF) form the signal peptide. 3 disulfides stabilise this stretch: C97-C152, C115-C167, and C122-C129. Residues N130 and N142 are each glycosylated (N-linked (GlcNAc...) asparagine).

It belongs to the pancreatic ribonuclease family.

The protein localises to the secreted. Functionally, does not exhibit any ribonuclease activity. This is Inactive ribonuclease-like protein 9 (RNASE9) from Papio anubis (Olive baboon).